A 63-amino-acid chain; its full sequence is Period circadian protein (63 aa).

Positions 1-63 (EGSGGSGSSG…VTLTESLLNK (63 aa)) are disordered. 2 stretches are compositionally biased toward low complexity: residues 9-31 (SGNFTTGSNVRMSSVTNTSNAGT) and 39-49 (SAAASGASVNA). The segment covering 54 to 63 (VTLTESLLNK) has biased composition (polar residues).

As to quaternary structure, forms a heterodimer with timeless (TIM); the complex then translocates into the nucleus. Post-translationally, phosphorylated with a circadian rhythmicity, probably by the double-time protein (dbt). Phosphorylation could be implicated in the stability of per monomer and in the formation of heterodimer per-tim.

The protein resides in the nucleus. Its subcellular location is the cytoplasm. The protein localises to the perinuclear region. Essential for biological clock functions. Determines the period length of circadian and ultradian rhythms; an increase in PER dosage leads to shortened circadian rhythms and a decrease leads to lengthened circadian rhythms. Essential for the circadian rhythmicity of locomotor activity, eclosion behavior, and for the rhythmic component of the male courtship song that originates in the thoracic nervous system. The biological cycle depends on the rhythmic formation and nuclear localization of the TIM-PER complex. Light induces the degradation of TIM, which promotes elimination of PER. Nuclear activity of the heterodimer coordinatively regulates PER and TIM transcription through a negative feedback loop. Behaves as a negative element in circadian transcriptional loop. Does not appear to bind DNA, suggesting indirect transcriptional inhibition. The chain is Period circadian protein (per) from Drosophila immigrans (Fruit fly).